Consider the following 274-residue polypeptide: Large ribosomal subunit protein uL2cz/uL2cy (274 aa).

2 disordered regions span residues 1–21 (MAIHLYKTSTPGTRNGAVDSQ) and 224–274 (NPVD…RRSK).

The protein belongs to the universal ribosomal protein uL2 family. As to quaternary structure, part of the 50S ribosomal subunit.

It is found in the plastid. The protein resides in the chloroplast. The polypeptide is Large ribosomal subunit protein uL2cz/uL2cy (rpl2-A) (Gossypium hirsutum (Upland cotton)).